The primary structure comprises 878 residues: F-box DNA helicase protein 1 (878 aa).

In terms of domain architecture, F-box spans 8-56 (SCKFYRLPLEIIPLICRFLSVQDIQSFIRVFPSFQTILDSSNDLFWKKK).

This sequence belongs to the helicase family. UvrD subfamily. As to quaternary structure, part of the E3 ubiquitin ligase Skp1-Cullin-1-F-box (SCF) complex. Interacts with skp1 and ssb1. It depends on Mg(2+) as a cofactor. The cofactor is Mn(2+).

It is found in the cytoplasm. It localises to the nucleus. The enzyme catalyses Couples ATP hydrolysis with the unwinding of duplex DNA by translocating in the 3'-5' direction.. The catalysed reaction is ATP + H2O = ADP + phosphate + H(+). It participates in protein modification; protein ubiquitination. Involved in ATP-dependent DNA-unwinding in a 3' to 5' direction, and ATP-ase activities stimulated by the single-stranded DNA-binding protein ssb1. Essential for viability and normal growth of stationary phase cells and in the absence of either srs2 or rqh1 DNA helicase. Involved in DNA recombination repair of strand breaks and stalled or collapsed replication forks, on the rhp51-dependent pathway: promotes rhp51 filament dissolution from stalled forks, thereby inhibiting homologous recombination and preventing excessive recombination. Ubiquitination and DNA helicase activities are essential for controlling rhp51-dependent recombination in the absence of rad22. Plays a role in the processing of toxic recombination intermediates. Promotes proper chromosome segregation. The sequence is that of F-box DNA helicase protein 1 (fbh1) from Schizosaccharomyces pombe (strain 972 / ATCC 24843) (Fission yeast).